A 365-amino-acid chain; its full sequence is Transcription elongation factor, mitochondrial (365 aa).

Residues 1–40 constitute a mitochondrion transit peptide; the sequence is MAWRANLACLIKAGGRTRWFPLPEYLSMSPVLHNTCSRRK.

The protein belongs to the TEFM family. Interacts with POLRMT.

The protein localises to the mitochondrion matrix. It localises to the mitochondrion nucleoid. Its function is as follows. Transcription elongation factor which increases mitochondrial RNA polymerase processivity. Regulates transcription of the mitochondrial genome, including genes important for the oxidative phosphorylation machinery. This Rattus norvegicus (Rat) protein is Transcription elongation factor, mitochondrial (Tefm).